The primary structure comprises 548 residues: CTP synthase (548 aa).

The interval Met1–Ile265 is amidoligase domain. Ser13 serves as a coordination point for CTP. Ser13 contacts UTP. Residues Ser14 to Ile19 and Asp71 each bind ATP. The Mg(2+) site is built by Asp71 and Glu139. CTP contacts are provided by residues Asp146–Glu148, Lys186–Gln191, and Lys222. Residues Lys186–Gln191 and Lys222 each bind UTP. The 252-residue stretch at Asn290 to Ala541 folds into the Glutamine amidotransferase type-1 domain. Position 351 (Gly351) interacts with L-glutamine. Cys378 functions as the Nucleophile; for glutamine hydrolysis in the catalytic mechanism. L-glutamine-binding positions include Leu379–Gln382, Glu402, and Arg469. Catalysis depends on residues His514 and Glu516.

Belongs to the CTP synthase family. In terms of assembly, homotetramer.

It carries out the reaction UTP + L-glutamine + ATP + H2O = CTP + L-glutamate + ADP + phosphate + 2 H(+). The enzyme catalyses L-glutamine + H2O = L-glutamate + NH4(+). It catalyses the reaction UTP + NH4(+) + ATP = CTP + ADP + phosphate + 2 H(+). It participates in pyrimidine metabolism; CTP biosynthesis via de novo pathway; CTP from UDP: step 2/2. Its activity is regulated as follows. Allosterically activated by GTP, when glutamine is the substrate; GTP has no effect on the reaction when ammonia is the substrate. The allosteric effector GTP functions by stabilizing the protein conformation that binds the tetrahedral intermediate(s) formed during glutamine hydrolysis. Inhibited by the product CTP, via allosteric rather than competitive inhibition. In terms of biological role, catalyzes the ATP-dependent amination of UTP to CTP with either L-glutamine or ammonia as the source of nitrogen. Regulates intracellular CTP levels through interactions with the four ribonucleotide triphosphates. In Chromohalobacter salexigens (strain ATCC BAA-138 / DSM 3043 / CIP 106854 / NCIMB 13768 / 1H11), this protein is CTP synthase.